Here is a 263-residue protein sequence, read N- to C-terminus: CRISPR-associated protein Cas5 2 (263 aa).

Belongs to the CRISPR-associated protein Cas5 family. Subtype I-A/Apern subfamily. In terms of assembly, part of the aCascade ribonucleoprotein complex, minimally composed of Csa2 and Cas5a, which binds crRNA. Other possible components of aCascade in strain P1 are Cas6b (SSO1437) and Csa5 (SSO1443), while SSO1399, Cas5b (SSO1400) and SSO1401 have sometimes been seen weakly associated. Csa2 is probably the major RNA-binding subunit. The Csa2-Cas5a-crRNA complex also binds target DNA homologous to crRNA, probably forming an R-loop. Purified aCascade forms a filament about 6 nm in width.

In terms of biological role, CRISPR (clustered regularly interspaced short palindromic repeat) is an adaptive immune system that provides protection against mobile genetic elements (viruses, transposable elements and conjugative plasmids). CRISPR clusters contain spacers, sequences complementary to antecedent mobile elements, and target invading nucleic acids. CRISPR clusters are transcribed and processed into CRISPR RNA (crRNA). This Saccharolobus solfataricus (strain ATCC 35092 / DSM 1617 / JCM 11322 / P2) (Sulfolobus solfataricus) protein is CRISPR-associated protein Cas5 2 (cas5b).